Here is a 119-residue protein sequence, read N- to C-terminus: Large ribosomal subunit protein uL22 (119 aa).

It belongs to the universal ribosomal protein uL22 family. Part of the 50S ribosomal subunit.

This protein binds specifically to 23S rRNA; its binding is stimulated by other ribosomal proteins, e.g. L4, L17, and L20. It is important during the early stages of 50S assembly. It makes multiple contacts with different domains of the 23S rRNA in the assembled 50S subunit and ribosome. Its function is as follows. The globular domain of the protein is located near the polypeptide exit tunnel on the outside of the subunit, while an extended beta-hairpin is found that lines the wall of the exit tunnel in the center of the 70S ribosome. In Chlorobium chlorochromatii (strain CaD3), this protein is Large ribosomal subunit protein uL22.